The primary structure comprises 663 residues: DNA ligase (663 aa).

NAD(+) is bound by residues 31–35, 80–81, and E109; these read DSEYD and SL. The active-site N6-AMP-lysine intermediate is the K111. 4 residues coordinate NAD(+): R132, E166, K282, and K306. C400, C403, C418, and C423 together coordinate Zn(2+). Residues 585-663 form the BRCT domain; it reads ELHPVFGEKT…EQMMVDALRN (79 aa).

The protein belongs to the NAD-dependent DNA ligase family. LigA subfamily. Requires Mg(2+) as cofactor. The cofactor is Mn(2+).

The catalysed reaction is NAD(+) + (deoxyribonucleotide)n-3'-hydroxyl + 5'-phospho-(deoxyribonucleotide)m = (deoxyribonucleotide)n+m + AMP + beta-nicotinamide D-nucleotide.. Functionally, DNA ligase that catalyzes the formation of phosphodiester linkages between 5'-phosphoryl and 3'-hydroxyl groups in double-stranded DNA using NAD as a coenzyme and as the energy source for the reaction. It is essential for DNA replication and repair of damaged DNA. This Macrococcus caseolyticus (strain JCSC5402) (Macrococcoides caseolyticum) protein is DNA ligase.